A 703-amino-acid chain; its full sequence is Subtilisin-like protease SBT4.7 (703 aa).

Positions methionine 1–alanine 19 are cleaved as a signal peptide. A propeptide spans valine 20–glutamine 107 (activation peptide). Positions valine 29–leucine 106 constitute an Inhibitor I9 domain. One can recognise a Peptidase S8 domain in the interval serine 111–isoleucine 556. The active-site Charge relay system is the aspartate 139. An N-linked (GlcNAc...) asparagine glycan is attached at asparagine 170. The active-site Charge relay system is the histidine 194. Residues asparagine 217, asparagine 360, asparagine 416, and asparagine 433 are each glycosylated (N-linked (GlcNAc...) asparagine). Positions lysine 350 to leucine 411 constitute a PA domain. Residue serine 495 is the Charge relay system of the active site. N-linked (GlcNAc...) asparagine glycans are attached at residues asparagine 577, asparagine 615, and asparagine 633.

This sequence belongs to the peptidase S8 family. Post-translationally, the C-terminal propeptide is autocleaved.

It is found in the secreted. This Arabidopsis thaliana (Mouse-ear cress) protein is Subtilisin-like protease SBT4.7.